A 2481-amino-acid chain; its full sequence is Serine/threonine-protein kinase TOR (2481 aa).

The tract at residues 1 to 31 (MSTSSQSFVAGRPASMASPSQSHRFCGPSAT) is disordered. HEAT repeat units follow at residues 205 to 242 (VHVPEFVDAIWVALRDPQLQVRERAVEALRACLRVIEK), 292 to 329 (SRYREVAEIVLRYLEHRDRLVRLSITSLLPRIAHFLRD), 373 to 410 (HYLPTIMSHLRDAIAPRKGRPLLEAVACVGNIAKAMGS), 434 to 471 (DALDQITISIPSLLPTVQDRLLDCISLVLSKSHYSQAK), 569 to 607 (RLVEEIVEKLLRTAVADADVTVRKSIFVALFGNQCFDDY), 608 to 645 (LAQADSLTAIFASLNDEDLDVREYAISVAGRLSEKNPA), 737 to 775 (QYIPELMPLIVEALMDGAAVAKREVAVSTLGQVVQSTGY), and 781 to 819 (KEYPLLLGLLLKLLKGDLVWSTRREVLKVLGIMGALDPH). Positions 823–847 (RNQQSLSGSHGEVPRGTGDSGQPIP) are disordered. 6 HEAT repeats span residues 866 to 904 (YYSTVAINSLMRILRDASLLSYHKRVVRSLMIIFKSMGL), 908 to 945 (PYLPKVLPELFHTVRTSDENLKDFITWGLGTLVSIVRQ), 952 to 992 (PELL…ALND), 996 to 1036 (TYLP…GTLD), 1037 to 1075 (EHMHLLLPALIRLFKVDAPVAIRRDAIKTLTRVIPCVQV), and 1077 to 1114 (GHISALVHHLKLVLDGKNDELRKDAVDALCCLAHALGE). The interval 1179–1204 (DPFEEGTDRNHQVNDGRLRTAGEASQ) is disordered. Residues 1184-1198 (GTDRNHQVNDGRLRT) show a composition bias toward basic and acidic residues. The 579-residue stretch at 1309 to 1887 (LLGALAEKCR…MYPLLVACKS (579 aa)) folds into the FAT domain. 2 consecutive short sequence motifs (nuclear localization signal) follow at residues 1505 to 1512 (VRRAKYDE) and 2075 to 2080 (KQRPRK). Residues 2065–2378 (FSRQLVVITS…DEDPADIDLP (314 aa)) enclose the PI3K/PI4K catalytic domain. The segment at 2071–2077 (VITSKQR) is G-loop. The interval 2244–2252 (GLGDRHPSN) is catalytic loop. The tract at residues 2264 to 2289 (HIDFGDCFEASMNREKFPEKVPFRLT) is activation loop. A disordered region spans residues 2354–2384 (NNNPNAPADVEPDEEDEDPADIDLPQPQRST). The span at 2363-2374 (VEPDEEDEDPAD) shows a compositional bias: acidic residues. Serine 2424 bears the Phosphoserine mark. In terms of domain architecture, FATC spans 2449-2481 (HGLSVKVQVQKLINQATSHENLCQNYVGWCPFW).

The protein belongs to the PI3/PI4-kinase family. In terms of assembly, interacts with RAPTOR1 and itself. Interacts with FKBP12 in a rapamycin-dependent manner. Binds to LST8-1. Hyperactivated upon interaction with cauliflower mosaic virus (CaMV) Tav protein. Post-translationally, activated by phosphorylation on Ser-2424 triggered by cauliflower mosaic virus P6 and auxin. As to expression, highly expressed in root meristems, shoot apical meristem (SAM) and floral buds.

It localises to the cytoplasm. Its subcellular location is the nucleus. The enzyme catalyses L-seryl-[protein] + ATP = O-phospho-L-seryl-[protein] + ADP + H(+). It catalyses the reaction L-threonyl-[protein] + ATP = O-phospho-L-threonyl-[protein] + ADP + H(+). Its activity is regulated as follows. Almost insensitive to rapamycin. Strongly repressed by specific active site inhibitors (asTORis) such as AZD-8055, TORIN2 and WYE-132, and, to a lesser extent, by KU63794, WYE-354 and TORIN1, leading to impaired photoautotrophic growth and abnormally early meristematic cells differentiation. Repression by TORIN1 leads to impaired responses to auxin, including gravitropism. Combined treatment with rapamycin and active-site inhibitors (e.g. Torin1 and AZD-8055) results in synergistic inhibition of activity and plant growth. Inhibition by KU63794 leads to reduced auxin content in root tips. AZD-8055 treatment reduces abscisic acid (ABA) levels. In addition, inhibition by AZD-8055 leads to a strong reduction of watermelon mosaic virus (WMV) infection. Essential cell growth regulator that controls development from early embryo to seed production. Controls plant growth in environmental stress conditions. Acts through the phosphorylation of downstream effectors that are recruited by the binding partner RAPTOR. Acts by activating transcription, protein synthesis and ribosome biogenesis, and inhibiting mRNA degradation and autophagy. Can phosphorylate TAP46, a regulatory subunit of protein phosphatase 2A that modulates cell growth and survival. Involved in modulating the transition from heterotrophic to photoautotrophic growth by regulating the expression of chloroplast- and photosynthesis-associated genes. Essential for auxin signaling transduction, probably acting in polysomes to maintain the active ATPK1/S6K1 (and thus TIF3H1/eIF3h) phosphorylation status that is critical for translation reinitiation (e.g. uORF-mRNAs loading). Promotes abscisic acid (ABA) biosynthesis. Involved in the regulation of sugar-mediated (e.g. glucose and sucrose) glycolysis- and mitochondrial bioenergetics-dependent root growth promotion. Required for sugar (e.g. glucose) promotion of hypocotyl elongation in the dark, by activating the brassinosteroid pathway and stabilizing BZR1. The regulation of BZR1 degradation is dependent on autophagy. Regulates the expression, phosphorylation and ribosome association of MRFs (e.g. MRF1, MRF3 and MRF4), especially under energy-deficient conditions. In terms of biological role, (Microbial infection) Binding to cauliflower mosaic virus (CaMV) Tav protein is critical for both translation reinitiation and viral fitness. When activated by CaMV P6, promotes CaMV translation by inhibiting cellular autophagy and suppressing both silencing and innate immunity, thus conferring sensitivity to P.syringae. Its function is as follows. (Microbial infection) Required during infection by some potyvirus such as Watermelon mosaic virus (WMV) but not for turnip mosaic virus (TuMV). This is Serine/threonine-protein kinase TOR from Arabidopsis thaliana (Mouse-ear cress).